The chain runs to 207 residues: Cytidylyl-2-hydroxypropylphosphonate hydrolase (207 aa).

Residues Trp-68, Arg-74, Gln-76, and Ser-77 each contribute to the CDP site. The a divalent metal cation site is built by Asn-109, Asp-125, Glu-127, and Asp-129. Lys-142 provides a ligand contact to CDP. Lys-142 serves as the catalytic Proton donor. Asp-143 contacts a divalent metal cation.

This sequence belongs to the FomD family. Mn(2+) is required as a cofactor. Co(2+) serves as cofactor.

The catalysed reaction is cytidine 5'-({hydroxy[(S)-2-hydroxypropyl]phosphonoyl}phosphate) + H2O = (S)-2-hydroxypropylphosphonate + CMP + H(+). It participates in antibiotic biosynthesis; fosfomycin biosynthesis. Its activity is regulated as follows. Hydrolysis of (S)-HPP-CMP is inhibited by CDP. Involved in fosfomycin biosynthesis. Catalyzes the hydrolysis of cytidylyl (S)-2-hydroxypropylphosphonate ((S)-HPP-CMP) to give (S)-2-hydroxypropylphosphonate ((S)-HPP) and CMP. Can also hydrolyze (R)-HPP-CMP and cytidylyl 2-hydroxyethylphosphonate (HEP-CMP), which is a biosynthetic intermediate before C-methylation, but the catalytic efficiency is much higher with (S)-HPP-CMP. The polypeptide is Cytidylyl-2-hydroxypropylphosphonate hydrolase (Streptomyces fradiae (Streptomyces roseoflavus)).